The following is a 111-amino-acid chain: Large ribosomal subunit protein uL22 (111 aa).

The protein belongs to the universal ribosomal protein uL22 family. Part of the 50S ribosomal subunit.

In terms of biological role, this protein binds specifically to 23S rRNA; its binding is stimulated by other ribosomal proteins, e.g. L4, L17, and L20. It is important during the early stages of 50S assembly. It makes multiple contacts with different domains of the 23S rRNA in the assembled 50S subunit and ribosome. The globular domain of the protein is located near the polypeptide exit tunnel on the outside of the subunit, while an extended beta-hairpin is found that lines the wall of the exit tunnel in the center of the 70S ribosome. This Mycoplasma capricolum subsp. capricolum (strain California kid / ATCC 27343 / NCTC 10154) protein is Large ribosomal subunit protein uL22.